We begin with the raw amino-acid sequence, 71 residues long: Glucose-repressible gene protein (71 aa).

The segment at 19 to 71 (TATASKEANKDVAKDSNQGVGTRLNAAGDAISDKVSENKHDAKAEAHKQGATH) is disordered. Residues 49 to 71 (ISDKVSENKHDAKAEAHKQGATH) are compositionally biased toward basic and acidic residues.

This is Glucose-repressible gene protein (grg-1) from Neurospora crassa (strain ATCC 24698 / 74-OR23-1A / CBS 708.71 / DSM 1257 / FGSC 987).